The sequence spans 152 residues: MLQVFERLDHTHDEISDSITLDQDTRKKSRIKSVTDKGANIGIFVERGHPLLVGEILKTECGLLIEVKGKAEDVSTAVANDWLNFSKVCYHLGNRHTTLQIGELWVRFKPDHVLEQLAENYGLSVNSIPAVFEPENGAYGVRSHGHSHAHDS.

The protein belongs to the UreE family.

It is found in the cytoplasm. In terms of biological role, involved in urease metallocenter assembly. Binds nickel. Probably functions as a nickel donor during metallocenter assembly. The polypeptide is Urease accessory protein UreE (Psychromonas ingrahamii (strain DSM 17664 / CCUG 51855 / 37)).